A 222-amino-acid polypeptide reads, in one-letter code: uncharacterized protein (222 aa).

Residues Asn4, Asn75, Asn84, Asn104, Asn170, and Asn175 are each glycosylated (N-linked (GlcNAc...) asparagine; by host). The chain crosses the membrane as a helical span at residues 200 to 220 (LIIIIGIVIILLLIIVMIKTV).

The protein localises to the membrane. This is an uncharacterized protein from Acanthamoeba polyphaga (Amoeba).